A 696-amino-acid polypeptide reads, in one-letter code: Probable E3 ubiquitin ligase complex SCF subunit sconB (696 aa).

Positions 1–12 are enriched in basic and acidic residues; that stretch reads MDAHELSFRDGH. The interval 1 to 72 is disordered; the sequence is MDAHELSFRD…HSFNTQKPIR (72 aa). Residues 55–69 are compositionally biased toward polar residues; sequence PGSTQDKPHSFNTQK. Residues 193–239 form the F-box domain; sequence IDFLTALPPEISFKILCYLDTTSLCKAAQVSRRWRALADDDVVWHRM. The segment at 290-314 is disordered; that stretch reads SATIETAAAGSKRKPESGKEDTAMV. Residues 302–313 are compositionally biased toward basic and acidic residues; it reads RKPESGKEDTAM. WD repeat units follow at residues 365-402, 405-444, 446-482, 484-525, 579-622, 623-662, and 665-696; these read GHSNGIMCLQFEDNILATGSYDATIKIWDTETGEELRT, GHQSGIRCLQFDDTKLISGSMDHTLKVWNWRTGECISTYS, HRGGVVGLHFDATILASGSVDKTVKIWNFEDKSTCLL, GHTD…RTFH, DTPS…CLRT, FFGHLEGVWALAADTLRIVSGAEDRMVKIWDPRTGKCERT, and GHSGPVTCIGLGDSRFATGSEDCEVRMYSFQT. The disordered stretch occupies residues 554–596; sequence NVSVTSGDSPAASPQALPGFDGQTSDTPSSAFGPAFDDGRPSP.

Belongs to the WD repeat MET30/SCONB/SCON-2 family. In terms of assembly, component of the SCF(sconB) E3 ubiquitin ligase complex.

It functions in the pathway protein modification; protein ubiquitination. Functionally, component of the SCF(sconB) E3 ubiquitin ligase complex involved in the regulation of sulfur metabolite repression, probably by mediating the inactivation or degradation of the metR transcription factor. This chain is Probable E3 ubiquitin ligase complex SCF subunit sconB (sconB), found in Aspergillus fumigatus (strain ATCC MYA-4609 / CBS 101355 / FGSC A1100 / Af293) (Neosartorya fumigata).